The primary structure comprises 195 residues: Imidazoleglycerol-phosphate dehydratase (195 aa).

This sequence belongs to the imidazoleglycerol-phosphate dehydratase family.

It localises to the cytoplasm. It catalyses the reaction D-erythro-1-(imidazol-4-yl)glycerol 3-phosphate = 3-(imidazol-4-yl)-2-oxopropyl phosphate + H2O. It functions in the pathway amino-acid biosynthesis; L-histidine biosynthesis; L-histidine from 5-phospho-alpha-D-ribose 1-diphosphate: step 6/9. The protein is Imidazoleglycerol-phosphate dehydratase of Trichlorobacter lovleyi (strain ATCC BAA-1151 / DSM 17278 / SZ) (Geobacter lovleyi).